The chain runs to 63 residues: uncharacterized protein (63 aa).

An N-terminal signal peptide occupies residues 1 to 15; that stretch reads MRNPVVWGMIYFAVG. The N-palmitoyl cysteine moiety is linked to residue cysteine 16. Cysteine 16 carries S-diacylglycerol cysteine lipidation. A helical membrane pass occupies residues 34 to 56; the sequence is SILLMVFAAYNISISFKMFAFSF.

Its subcellular location is the cell membrane. This is an uncharacterized protein from Bacillus subtilis (strain 168).